Consider the following 173-residue polypeptide: UPF0398 protein SMU_470 (173 aa).

Belongs to the UPF0398 family.

This chain is UPF0398 protein SMU_470, found in Streptococcus mutans serotype c (strain ATCC 700610 / UA159).